The primary structure comprises 74 residues: MKLIAVTIIACILLIGFSDLALGGACECQPCGPGGKACTGCPEKPQLCQQLISDIRNLQQKIRKCVCGEPQWMI.

Residues 1-23 (MKLIAVTIIACILLIGFSDLALG) form the signal peptide.

In Drosophila melanogaster (Fruit fly), this protein is Salivary glue protein Sgs-7 (Sgs7).